The primary structure comprises 401 residues: MNSPQPPDTTAAGSVHTAPTYTLRQLVMYFLRLGTLGFGGPVALAGYMHRDLVEAKQWITDADYKEGLALAQLAPGPLAAQLAIYLGYVHYRIVGATLVGVAFVLPSFLMVLALGWAYVRFGGLTWMQSVFYGVGAAVIGIIAISAYKLTKKSVGNDKLLWFIYLVLVAVTVITESEVAWLFLAAGVLVWFWRAPPKWLRQGKMNAFAATPLPAASGMMSTLDWPLLSQIGVFFAKAGAFVFGSGLAIVPFLYGGVVTEYHWLNDKQFVDAVAVAMITPGPVVITVGFIGYLVAGLPGACVAAAATFLPCYLFTVLPAPYFKKYGKLPAILAFVDGVTAAAIGAITGAVIVLAKRSIVDIPTALLALVTVALLLKFKKLSEPMIVAGAALIGLVAYPLLHH.

A run of 12 helical transmembrane segments spans residues 26-46, 67-87, 93-113, 124-144, 172-192, 214-234, 237-257, 272-294, 299-321, 330-350, 356-376, and 379-399; these read LVMY…ALAG, GLAL…IYLG, IVGA…MVLA, LTWM…IIAI, VITE…VWFW, AASG…GVFF, AGAF…GGVV, VAVA…YLVA, ACVA…APYF, ILAF…GAVI, SIVD…LLKF, and LSEP…YPLL.

It belongs to the chromate ion transporter (CHR) (TC 2.A.51) family.

The protein resides in the cell inner membrane. This protein reduces chromate accumulation and is essential for chromate resistance. This Cupriavidus metallidurans (strain ATCC 43123 / DSM 2839 / NBRC 102507 / CH34) (Ralstonia metallidurans) protein is Chromate transport protein.